We begin with the raw amino-acid sequence, 348 residues long: Mitogen-activated protein kinase 14B (348 aa).

One can recognise a Protein kinase domain in the interval 25–309; sequence YQNLSPVGSG…ASQALAHPYF (285 aa). Residues 31–39 and Lys54 each bind ATP; that span reads VGSGAYGSV. Residue Asp169 is the Proton acceptor of the active site. A Phosphothreonine; by MAP2K3 modification is found at Thr181. Residues 181–183 carry the TXY motif; that stretch reads TGY. Tyr183 carries the phosphotyrosine; by MAP2K3 modification.

It belongs to the protein kinase superfamily. CMGC Ser/Thr protein kinase family. MAP kinase subfamily. Mg(2+) serves as cofactor. In terms of processing, dually phosphorylated on Thr-181 and Tyr-183, which activates the enzyme.

It is found in the cytoplasm. It localises to the nucleus. It carries out the reaction L-seryl-[protein] + ATP = O-phospho-L-seryl-[protein] + ADP + H(+). The catalysed reaction is L-threonyl-[protein] + ATP = O-phospho-L-threonyl-[protein] + ADP + H(+). Activated by threonine and tyrosine phosphorylation by the dual specificity kinase, MKK3. Functionally, serine/threonine kinase which acts as an essential component of the MAP kinase signal transduction pathway. Mapk14b is one of the four p38 MAPKs which play an important role in the cascades of cellular responses evoked by extracellular stimuli such as pro-inflammatory cytokines or physical stress leading to direct activation of transcription factors. Accordingly, p38 MAPKs phosphorylate a broad range of proteins and it has been estimated that they may have approximately 200 to 300 substrates each. Some of the targets are downstream kinases which are activated through phosphorylation and further phosphorylate additional targets. This chain is Mitogen-activated protein kinase 14B (mapk14b), found in Danio rerio (Zebrafish).